Reading from the N-terminus, the 221-residue chain is Thiol:disulfide interchange protein TlpA (221 aa).

Over Met1–Arg11 the chain is Cytoplasmic. Residues Ile12–Leu35 traverse the membrane as a helical segment. The Periplasmic portion of the chain corresponds to Ser36–Leu221. 2 cysteine pairs are disulfide-bonded: Cys45-Cys190 and Cys107-Cys110. Residues Ala69–Gly215 form the Thioredoxin domain.

It belongs to the thioredoxin family. In terms of assembly, monomer.

It is found in the cell membrane. Involved in cytochrome aa3 assembly. The protein is Thiol:disulfide interchange protein TlpA (tlpA) of Bradyrhizobium diazoefficiens (strain JCM 10833 / BCRC 13528 / IAM 13628 / NBRC 14792 / USDA 110).